The sequence spans 220 residues: Large ribosomal subunit protein eL15 (220 aa).

It belongs to the eukaryotic ribosomal protein eL15 family.

This Staphylothermus marinus (strain ATCC 43588 / DSM 3639 / JCM 9404 / F1) protein is Large ribosomal subunit protein eL15.